A 499-amino-acid chain; its full sequence is MTILEVGSQLIESAVLQMSLTSVLLTASVFTLTLGYFSKLLFTQHSSEHTKYPPHIPSSLPFLGQAVAFGRSPIEFLEKAYEQYGPVVSFTMVGKTFTYLLGSDAAALMFNSKNEDLNAEDVYARLTTPVFGKGVAYDVPNPLFLEQKKMLKTGLNIAQFKQHVEIIEEETKDYFRRWGESGERNLFDALSELIILTASRCLHGCEIRSLLDERVAQLYADLDGGFTHAAWLLPGWLPLPSFRRRDRAHLEIKKIFYNVIKKRREDTEKHDDILQTLIDATYKDGRPLSDDEIAGMLIGLLLAGQHTSSTTSAWMGFFLARDRALQERCYSEQKSVCGEELPPLHYDQLKDLSLLDRCLKETLRLRPPIMTMMRMAKTPQKVGEYTIPPGHQVCVSPTVNHRLQDTWAERLDFDPDRYLHDNPAAGEKFAYIPFGAGRHRCIGENFAYVQIKTIWSTLLRMFDFELVDGHFPPVNYTTMIHTPHNPIIRYTRRNTQPQQ.

Residues 13-35 (SAVLQMSLTSVLLTASVFTLTLG) traverse the membrane as a helical segment. Position 441 (cysteine 441) interacts with heme.

The protein belongs to the cytochrome P450 family. Requires heme as cofactor. Strongly expressed in intestine. Moderately expressed in liver, with higher levels in females compared to males. Also detected at low levels in brain, eye, kidney and testis.

It localises to the endoplasmic reticulum membrane. The protein resides in the membrane. The enzyme catalyses a 14alpha-methyl steroid + 3 reduced [NADPH--hemoprotein reductase] + 3 O2 = a Delta(14) steroid + formate + 3 oxidized [NADPH--hemoprotein reductase] + 4 H2O + 4 H(+). It carries out the reaction lanosterol + 3 reduced [NADPH--hemoprotein reductase] + 3 O2 = 4,4-dimethyl-5alpha-cholesta-8,14,24-trien-3beta-ol + formate + 3 oxidized [NADPH--hemoprotein reductase] + 4 H2O + 4 H(+). It catalyses the reaction 24,25-dihydrolanosterol + 3 reduced [NADPH--hemoprotein reductase] + 3 O2 = 4,4-dimethyl-8,14-cholestadien-3beta-ol + formate + 3 oxidized [NADPH--hemoprotein reductase] + 4 H2O + 4 H(+). The catalysed reaction is a 14alpha-methyl steroid + reduced [NADPH--hemoprotein reductase] + O2 = a 14alpha-hydroxymethyl steroid + oxidized [NADPH--hemoprotein reductase] + H2O + H(+). The enzyme catalyses a 14alpha-hydroxymethyl steroid + reduced [NADPH--hemoprotein reductase] + O2 = a 14alpha-formyl steroid + oxidized [NADPH--hemoprotein reductase] + 2 H2O + H(+). It carries out the reaction a 14alpha-formyl steroid + reduced [NADPH--hemoprotein reductase] + O2 = a Delta(14) steroid + formate + oxidized [NADPH--hemoprotein reductase] + H2O + 2 H(+). It catalyses the reaction lanosterol + reduced [NADPH--hemoprotein reductase] + O2 = 32-hydroxylanosterol + oxidized [NADPH--hemoprotein reductase] + H2O + H(+). The catalysed reaction is 32-hydroxylanosterol + reduced [NADPH--hemoprotein reductase] + O2 = 32-oxolanosterol + oxidized [NADPH--hemoprotein reductase] + 2 H2O + H(+). The enzyme catalyses 32-oxolanosterol + reduced [NADPH--hemoprotein reductase] + O2 = 4,4-dimethyl-5alpha-cholesta-8,14,24-trien-3beta-ol + formate + oxidized [NADPH--hemoprotein reductase] + H2O + 2 H(+). It carries out the reaction 24,25-dihydrolanosterol + reduced [NADPH--hemoprotein reductase] + O2 = 32-hydroxy-24,25-dihydrolanosterol + oxidized [NADPH--hemoprotein reductase] + H2O + H(+). It catalyses the reaction 32-hydroxy-24,25-dihydrolanosterol + reduced [NADPH--hemoprotein reductase] + O2 = 32-oxo-24,25-dihydrolanosterol + oxidized [NADPH--hemoprotein reductase] + 2 H2O + H(+). The catalysed reaction is 32-oxo-24,25-dihydrolanosterol + reduced [NADPH--hemoprotein reductase] + O2 = 4,4-dimethyl-8,14-cholestadien-3beta-ol + formate + oxidized [NADPH--hemoprotein reductase] + H2O + 2 H(+). It functions in the pathway steroid biosynthesis; zymosterol biosynthesis; zymosterol from lanosterol: step 1/6. Inhibited by ketoconazole. May also be inhibited to a lesser extent by propiconazole. In terms of biological role, sterol 14alpha-demethylase that plays a critical role in the cholesterol biosynthesis pathway, being cholesterol the major sterol component in deuterostome membranes as well as a precursor for steroid hormone synthesis. Cytochrome P450 monooxygenase that catalyzes the three-step oxidative removal of the 14alpha-methyl group (C-32) of sterols such as lanosterol (lanosta-8,24-dien-3beta-ol) and 24,25-dihydrolanosterol (DHL) in the form of formate, and converts the sterols to 4,4-dimethyl-5alpha-cholesta-8,14,24-trien-3beta-ol and 4,4-dimethyl-8,14-cholestadien-3beta-ol, respectively, which are intermediates of cholesterol biosynthesis. Can also demethylate substrates not intrinsic to deuterostomes, such as eburicol (24-methylene-24,25-dihydrolanosterol), but at a lower rate than DHL. The chain is Lanosterol 14-alpha demethylase from Danio rerio (Zebrafish).